We begin with the raw amino-acid sequence, 334 residues long: Fructose-1,6-bisphosphatase class 1 (334 aa).

Positions 89, 112, 114, and 115 each coordinate Mg(2+). Residues 115–118 (DGSS), N208, Y241, and K271 each bind substrate. Mg(2+) is bound at residue E277.

The protein belongs to the FBPase class 1 family. As to quaternary structure, homotetramer. The cofactor is Mg(2+).

The protein resides in the cytoplasm. It carries out the reaction beta-D-fructose 1,6-bisphosphate + H2O = beta-D-fructose 6-phosphate + phosphate. It functions in the pathway carbohydrate biosynthesis; gluconeogenesis. The protein is Fructose-1,6-bisphosphatase class 1 of Serratia proteamaculans (strain 568).